Consider the following 132-residue polypeptide: MKVVYYSFSGNVRRFISRAGIKDTFEITQDNCNESVNEPYILVTGTIGFGEVPQPVQSFLNVNHTQLQAVAASGNRNWGQNFAKAGHTISEEYKVPLMMKFEVQGTNKDIIEFKDKVGNFNENHGRKEIQSY.

It belongs to the NrdI family.

Functionally, probably involved in ribonucleotide reductase function. This Staphylococcus epidermidis (strain ATCC 35984 / DSM 28319 / BCRC 17069 / CCUG 31568 / BM 3577 / RP62A) protein is Protein NrdI.